A 287-amino-acid chain; its full sequence is L-cysteine S-thiosulfotransferase subunit SoxA (287 aa).

The N-terminal stretch at 1-26 is a signal peptide; that stretch reads MKTMTGRLVAAALVCGGAFSGAAVSA. A Cytochrome c domain is found at 74 to 168; the sequence is DDFENSGMVF…AMVALIASVS (95 aa). Cys102, Cys105, His106, Cys140, Cys203, Cys206, and His207 together coordinate heme c. Residue Arg244 participates in substrate binding. Cys248 contacts heme c. Cys248 acts as the Cysteine persulfide intermediate in catalysis.

It belongs to the SoxA family. In terms of assembly, heterodimer of SoxA and SoxX. It depends on heme c as a cofactor. Cysteine persulfide at Cys-248.

The protein localises to the periplasm. It carries out the reaction L-cysteinyl-[SoxY protein] + thiosulfate + 2 Fe(III)-[cytochrome c] = S-sulfosulfanyl-L-cysteinyl-[SoxY protein] + 2 Fe(II)-[cytochrome c] + 2 H(+). The catalysed reaction is S-sulfanyl-L-cysteinyl-[SoxY protein] + thiosulfate + 2 Fe(III)-[cytochrome c] = S-(2-sulfodisulfanyl)-L-cysteinyl-[SoxY protein] + 2 Fe(II)-[cytochrome c] + 2 H(+). C-type diheme cytochrome, which is part of the SoxAX cytochrome complex involved in sulfur oxidation. The SoxAX complex catalyzes the formation of a heterodisulfide bond between the conserved cysteine residue on a sulfur carrier SoxYZ complex subunit SoxY and thiosulfate or other inorganic sulfur substrates. This leads to the liberation of two electrons, which may be transferred from the SoxAX complex to another cytochrome c and which then may be used for reductive CO(2) fixation. The polypeptide is L-cysteine S-thiosulfotransferase subunit SoxA (Rhodovulum sulfidophilum (Rhodobacter sulfidophilus)).